A 396-amino-acid chain; its full sequence is Probable sugar efflux transporter (396 aa).

The Cytoplasmic segment spans residues 1 to 14; that stretch reads MTINPVSRKVAWLR. Residues 15 to 35 traverse the membrane as a helical segment; that stretch reads VVTLAIAAFIFNTTEFVPVGL. Residues 36-49 are Periplasmic-facing; the sequence is LSDIAESFHMQTAQ. A helical transmembrane segment spans residues 50 to 70; it reads VGIMLTIYAWVVAVMSLPFML. At 71–80 the chain is on the cytoplasmic side; it reads LTSQMERRKL. Residues 81 to 101 traverse the membrane as a helical segment; that stretch reads LIYLFVLFIASHVLSFLAWNF. Thr102 is a topological domain (periplasmic). The helical transmembrane segment at 103–123 threads the bilayer; the sequence is VLVISRIGIAFAHAIFWSITA. Residues 124-135 lie on the Cytoplasmic side of the membrane; the sequence is SLAIRLAPAGKR. A helical transmembrane segment spans residues 136–156; the sequence is AQALSLIATGTALAMVLGLPI. The Periplasmic segment spans residues 157 to 168; sequence GRVVGQYFGWRT. Residues 169-189 form a helical membrane-spanning segment; that stretch reads TFFAIGMGALITLLCLIKLLP. Topologically, residues 190–208 are cytoplasmic; it reads KLPSEHSGSLKSLPLLFRR. Residues 209–229 traverse the membrane as a helical segment; it reads PALMSLYVLTVVVVTAHYTAY. Over 230–245 the chain is Periplasmic; that stretch reads SYIEPFVQNVAGLSAN. Residues 246 to 266 traverse the membrane as a helical segment; that stretch reads FATVLLLILGGAGIIGSLVFG. Over 267 to 274 the chain is Cytoplasmic; the sequence is KLGNRHAS. Residues 275 to 295 form a helical membrane-spanning segment; sequence SLVSIAIALLVVCLLLLLPAA. Over 296–300 the chain is Periplasmic; sequence ESEAH. Residues 301–321 form a helical membrane-spanning segment; it reads LAILSIFWGIAIMVIGLGMQV. Topologically, residues 322-332 are cytoplasmic; sequence KVLALAPDATD. The chain crosses the membrane as a helical span at residues 333 to 353; the sequence is VAMALFSGIFNIGIGAGALVG. The Periplasmic portion of the chain corresponds to 354 to 363; sequence NQVSLHWSMS. A helical membrane pass occupies residues 364 to 384; that stretch reads AIGYIGAIPACAALVWAVLIF. Residues 385-396 are Cytoplasmic-facing; that stretch reads RKWPVTLEEQPH.

It belongs to the major facilitator superfamily. SotB (TC 2.A.1.2) family.

It localises to the cell inner membrane. Involved in the efflux of sugars. The physiological role may be the reduction of the intracellular concentration of toxic sugars or sugar metabolites. The protein is Probable sugar efflux transporter of Salmonella typhimurium (strain LT2 / SGSC1412 / ATCC 700720).